The primary structure comprises 149 residues: Ribonuclease-like 3 (149 aa).

The first 22 residues, 1–22 (MGIHQCTAVVLLLLCASLSTYG), serve as a signal peptide directing secretion. Gln-23 bears the Pyrrolidone carboxylic acid mark. His-38 serves as the catalytic Proton acceptor. 3 disulfide bridges follow: Cys-48–Cys-109, Cys-66–Cys-120, and Cys-84–Cys-135. Substrate is bound at residue 67–71 (KEVNT). The active-site Proton donor is the His-142.

It belongs to the pancreatic ribonuclease family. Cleavage between Arg-55 and Arg-56 is catalyzed by a membrane-localized Gram-negative bacterium protease (OmpT in E.coli). The excised fragment is then transported to the bacterium cytosol for cleavage of the disulfide bridge linking Cys-48 and Cys-109, thus separating the N-terminal and LF-ZF3. LF-ZF3 but not the N-terminal peptide possesses bactericidal activity. In terms of tissue distribution, strongly expressed in the adult liver and gut, and weakly in the heart and testis.

The protein resides in the secreted. In terms of biological role, ribonuclease. Angiogenic. Plays a role in host defense. Exhibits strong antibacterial activity against Gram-negative bacteria but mild antibacterial activity against Gram-positive bacteria. The RNase activity is not required for the bactericidal activity. In Danio rerio (Zebrafish), this protein is Ribonuclease-like 3.